Here is a 130-residue protein sequence, read N- to C-terminus: Large ribosomal subunit protein bL12 (130 aa).

It belongs to the bacterial ribosomal protein bL12 family. As to quaternary structure, homodimer. Part of the ribosomal stalk of the 50S ribosomal subunit. Forms a multimeric L10(L12)X complex, where L10 forms an elongated spine to which 2 to 4 L12 dimers bind in a sequential fashion. Binds GTP-bound translation factors.

Functionally, forms part of the ribosomal stalk which helps the ribosome interact with GTP-bound translation factors. Is thus essential for accurate translation. This Mycobacterium leprae (strain TN) protein is Large ribosomal subunit protein bL12.